Here is a 256-residue protein sequence, read N- to C-terminus: 6-phosphogluconolactonase (256 aa).

It belongs to the glucosamine/galactosamine-6-phosphate isomerase family. 6-phosphogluconolactonase subfamily.

It carries out the reaction 6-phospho-D-glucono-1,5-lactone + H2O = 6-phospho-D-gluconate + H(+). It functions in the pathway carbohydrate degradation; pentose phosphate pathway; D-ribulose 5-phosphate from D-glucose 6-phosphate (oxidative stage): step 2/3. Its function is as follows. Hydrolysis of 6-phosphogluconolactone to 6-phosphogluconate. This is 6-phosphogluconolactonase (pgl) from Chlamydia muridarum (strain MoPn / Nigg).